We begin with the raw amino-acid sequence, 798 residues long: Integrin beta-1 (798 aa).

A signal peptide spans 1–20 (MNLQLIFWIGLISSVCYVFG). Over 21–728 (QADENRCLKA…ETPECPTGPD (708 aa)) the chain is Extracellular. The PSI domain maps to 26 to 76 (RCLKANAKSCGECIQAGPNCGWCTNSTFLQEGMPTSARCDDLEALRKKGCH). Disulfide bonds link Cys27/Cys45, Cys35/Cys464, Cys38/Cys64, Cys48/Cys75, Cys207/Cys213, Cys261/Cys301, Cys401/Cys415, Cys435/Cys462, Cys466/Cys486, Cys477/Cys489, Cys491/Cys500, Cys502/Cys533, Cys516/Cys531, Cys525/Cys536, Cys538/Cys553, Cys555/Cys576, Cys560/Cys574, Cys568/Cys579, Cys581/Cys590, Cys592/Cys615, Cys599/Cys613, Cys607/Cys618, Cys620/Cys630, Cys633/Cys636, Cys640/Cys691, Cys646/Cys665, Cys649/Cys661, and Cys699/Cys723. A glycan (N-linked (GlcNAc...) asparagine) is linked at Asn50. A compositionally biased stretch (basic and acidic residues) spans 75–84 (CHPDDIENPR). A disordered region spans residues 75–107 (CHPDDIENPRGSKNIKKNKNVTNRSKGTAEKLQ). 2 N-linked (GlcNAc...) asparagine glycosylation sites follow: Asn94 and Asn97. Positions 140-378 (DYPIDLYYLM…QLIIDAYNSL (239 aa)) constitute a VWFA domain. 2 residues coordinate Mg(2+): Ser152 and Ser154. 4 residues coordinate Ca(2+): Ser154, Asp157, Asp158, and Glu189. Residues 207–213 (CTSEQNC) are CX3CL1-binding. Asn212 is a glycosylation site (N-linked (GlcNAc...) asparagine). Ca(2+) is bound by residues Asn244, Asp246, Pro248, and Glu249. Residue Glu249 coordinates Mg(2+). The N-linked (GlcNAc...) asparagine glycan is linked to Asn269. Residues 295 to 314 (LPNDGHCHLENDVYTMSHYY) form a CX3CL1-binding region. Residue Ala362 participates in Ca(2+) binding. 3 N-linked (GlcNAc...) asparagine glycosylation sites follow: Asn363, Asn406, and Asn417. An interaction with TMEM182 region spans residues 383–465 (ILENSKLPEG…IILQFICECE (83 aa)). I-EGF domains lie at 466–501 (CQSE…RHCE), 502–554 (CSTD…KFCE), 555–591 (CDNF…SACD), and 592–631 (CSLD…PTCE). The N-linked (GlcNAc...) asparagine glycan is linked to Asn481. Asn520 carries an N-linked (GlcNAc...) asparagine glycan. Residue Asn584 is glycosylated (N-linked (GlcNAc...) asparagine). Residue Asn669 is glycosylated (N-linked (GlcNAc...) asparagine). The chain crosses the membrane as a helical span at residues 729-749 (IIPIVAGVVAGIVLIGLALLL). Over 750-798 (IWKLLMIIHDRREFAKFEKEKMNAKWDTGENPIYKSAVTTVVNPKYEGK) the chain is Cytoplasmic. Residues 762–767 (EFAKFE) form a signal for sorting from recycling endosomes; interaction with ACAP1 region. Thr777 carries the post-translational modification Phosphothreonine. Tyr783 bears the Phosphotyrosine mark. Position 785 is a phosphoserine (Ser785). Residues 785-792 (SAVTTVVN) are interaction with ITGB1BP1. Residue Thr789 is modified to Phosphothreonine. An N6-acetyllysine; alternate modification is found at Lys794. A Glycyl lysine isopeptide (Lys-Gly) (interchain with G-Cter in SUMO1); alternate cross-link involves residue Lys794.

The protein belongs to the integrin beta chain family. In terms of assembly, interacts with seprase FAP (seprase); the interaction occurs at the cell surface of invadopodia membrane in a collagen-dependent manner. Heterodimer of an alpha and a beta subunit. Beta-1 associates with either alpha-1, alpha-2, alpha-3, alpha-4, alpha-5, alpha-6, alpha-7, alpha-8, alpha-9, alpha-10, alpha-11 or alpha-V. ITGA6:ITGB1 is found in a complex with CD9; interaction takes place in oocytes and is involved in sperm-egg fusion. Binds LGALS3BP and NMRK2, when associated with alpha-7, but not with alpha-5. Interacts with FLNA, FLNB, FLNC and RANBP9. Interacts with KRT1 in the presence of RACK1 and SRC. Interacts with JAML; integrin alpha-4/beta-1 may regulate leukocyte to endothelial cells adhesion by controlling JAML homodimerization. Interacts with RAB21. Interacts (via the cytoplasmic region) with RAB25 (via the hypervariable C-terminal region). Interacts with MYO10. Interacts with ITGB1BP1 (via C-terminal region); the interaction is a prerequisite for focal adhesion disassembly. Interacts with TLN1; the interaction is prevented by competitive binding of ITGB1BP1. Interacts with ACAP1; required for ITGB1 recycling. Interacts with ASAP3. Interacts with FERMT2; the interaction is inhibited in presence of ITGB1BP1. Interacts with DAB2. Interacts with FGR and HCK. Interacts with alpha-7A and alpha-7B in adult skeletal muscle. Interacts with alpha-7B in cardiomyocytes of adult heart. Interacts with EMP2; the interaction may be direct or indirect and ITGB1 has a heterodimer form. ITGA5:ITGB1 interacts with CCN3. ITGA4:ITGB1 is found in a ternary complex with CX3CR1 and CX3CL1. ITGA5:ITGB1 interacts with FBN1. ITGA5:ITGB1 interacts with IL1B. Interacts with MDK. ITGA4:ITGB1 interacts with MDK; this interaction mediates MDK-induced osteoblast cells migration through PXN phosphorylation. ITGA6:ITGB1 interacts with MDK; this interaction mediates MDK-induced neurite-outgrowth. ITGA5:ITGB1 interacts with ACE2. Interacts with TMEM182 and LAMB1. Interacts with tensin TNS3; TNS3 also interacts with PEAK1, thus acting as an adapter molecule to bridge the association of PEAK1 with ITGB1. Interacts with tensin TNS4; the interaction displaces tensin TNS3 from the ITGB1 cytoplasmic tail and promotes ITGB1 stability. Integrin ITGA9:ITGB1 interacts with SPP1/OPN (via N-terminus). Integrin ITGA9:ITGB1 interacts with TNC/TNFN3 (via the 3rd Fibronectin type-III domain). Integrins ITGA4:ITGB1 and ITGA9:ITGB1 interact with SVEP1 (via Sushi domain 21); thereby inhibit Ca(2+) intracellular signaling and as a result repress vasocontraction. ITGA4:ITGB1 and ITGA5:ITGB1 interacts with SELP. Interacts with CD248. ITGA5:ITGB1 interacts with IGFBP1. ITGA4:ITGB1 interacts with BCAM. Interacts with ADGRG6. In terms of tissue distribution, expressed in the spleen, thymus, alveolar macrophages, bone marrow, liver and kidney.

It localises to the cell membrane. The protein localises to the cell projection. The protein resides in the invadopodium membrane. It is found in the ruffle membrane. Its subcellular location is the recycling endosome. It localises to the melanosome. The protein localises to the lamellipodium. The protein resides in the ruffle. It is found in the cell junction. Its subcellular location is the focal adhesion. Its function is as follows. Integrins alpha-1/beta-1, alpha-2/beta-1, alpha-10/beta-1 and alpha-11/beta-1 are receptors for collagen. Integrins alpha-1/beta-1 and alpha-2/beta-2 recognize the proline-hydroxylated sequence G-F-P-G-E-R in collagen. Integrins alpha-2/beta-1, alpha-3/beta-1, alpha-4/beta-1, alpha-5/beta-1, alpha-8/beta-1, alpha-10/beta-1, alpha-11/beta-1 and alpha-V/beta-1 are receptors for fibronectin. Alpha-4/beta-1 recognizes one or more domains within the alternatively spliced CS-1 and CS-5 regions of fibronectin. Integrin alpha-5/beta-1 is a receptor for fibrinogen. Integrin alpha-1/beta-1, alpha-2/beta-1, alpha-6/beta-1 and alpha-7/beta-1 are receptors for lamimin. Integrin alpha-6/beta-1 (ITGA6:ITGB1) is present in oocytes and is involved in sperm-egg fusion. Integrin alpha-4/beta-1 is a receptor for VCAM1 and recognizes the sequence Q-I-D-S in VCAM1. Integrin alpha-9/beta-1 is a receptor for VCAM1, cytotactin and osteopontin. It recognizes the sequence A-E-I-D-G-I-E-L in cytotactin. Integrin alpha-3/beta-1 is a receptor for epiligrin, thrombospondin and CSPG4. Integrin alpha-3/beta-1 provides a docking site for FAP (seprase) at invadopodia plasma membranes in a collagen-dependent manner and hence may participate in the adhesion, formation of invadopodia and matrix degradation processes, promoting cell invasion. Alpha-3/beta-1 may mediate with LGALS3 the stimulation by CSPG4 of endothelial cells migration. Integrin alpha-V/beta-1 is a receptor for vitronectin. Beta-1 integrins recognize the sequence R-G-D in a wide array of ligands. When associated with alpha-7/beta-1 integrin, regulates cell adhesion and laminin matrix deposition. Involved in promoting endothelial cell motility and angiogenesis. Involved in osteoblast compaction through the fibronectin fibrillogenesis cell-mediated matrix assembly process and the formation of mineralized bone nodules. May be involved in up-regulation of the activity of kinases such as PKC via binding to KRT1. Together with KRT1 and RACK1, serves as a platform for SRC activation or inactivation. Plays a mechanistic adhesive role during telophase, required for the successful completion of cytokinesis. ITGA4:ITGB1 binds to fractalkine (CX3CL1) and may act as its coreceptor in CX3CR1-dependent fractalkine signaling. ITGA4:ITGB1 and ITGA5:ITGB1 bind to PLA2G2A via a site (site 2) which is distinct from the classical ligand-binding site (site 1) and this induces integrin conformational changes and enhanced ligand binding to site 1. ITGA5:ITGB1 acts as a receptor for fibrillin-1 (FBN1) and mediates R-G-D-dependent cell adhesion to FBN1. ITGA5:ITGB1 acts as a receptor for fibronectin FN1 and mediates R-G-D-dependent cell adhesion to FN1. ITGA5:ITGB1 is a receptor for IL1B and binding is essential for IL1B signaling. ITGA5:ITGB3 is a receptor for soluble CD40LG and is required for CD40/CD40LG signaling. Plays an important role in myoblast differentiation and fusion during skeletal myogenesis. ITGA9:ITGB1 may play a crucial role in SVEP1/polydom-mediated myoblast cell adhesion. Integrins ITGA9:ITGB1 and ITGA4:ITGB1 repress PRKCA-mediated L-type voltage-gated channel Ca(2+) influx and ROCK-mediated calcium sensitivity in vascular smooth muscle cells via their interaction with SVEP1, thereby inhibit vasocontraction. The protein is Integrin beta-1 (ITGB1) of Sus scrofa (Pig).